Consider the following 586-residue polypeptide: Phosphomethylpyrimidine synthase (586 aa).

The interval 1–33 is disordered; that stretch reads MKQSVSAEQIELKSSLPGSKKVYVDGPREGMKV. Over residues 22–33 the composition is skewed to basic and acidic residues; the sequence is VYVDGPREGMKV. Substrate contacts are provided by residues N193, M222, Y251, H287, 307–309, 348–351, and E387; these read SRG and DGLR. H391 lines the Zn(2+) pocket. Substrate is bound at residue Y414. H455 serves as a coordination point for Zn(2+). [4Fe-4S] cluster contacts are provided by C535, C538, and C543.

Belongs to the ThiC family. [4Fe-4S] cluster is required as a cofactor.

It carries out the reaction 5-amino-1-(5-phospho-beta-D-ribosyl)imidazole + S-adenosyl-L-methionine = 4-amino-2-methyl-5-(phosphooxymethyl)pyrimidine + CO + 5'-deoxyadenosine + formate + L-methionine + 3 H(+). The protein operates within cofactor biosynthesis; thiamine diphosphate biosynthesis. Its function is as follows. Catalyzes the synthesis of the hydroxymethylpyrimidine phosphate (HMP-P) moiety of thiamine from aminoimidazole ribotide (AIR) in a radical S-adenosyl-L-methionine (SAM)-dependent reaction. In Bacillus cereus (strain G9842), this protein is Phosphomethylpyrimidine synthase.